We begin with the raw amino-acid sequence, 723 residues long: Aspartate--tRNA(Asp/Asn) ligase 1 (723 aa).

L-aspartate is bound at residue glutamate 206. The interval 230-233 (QLFK) is aspartate. Arginine 252 lines the L-aspartate pocket. ATP contacts are provided by residues 252 to 254 (RDE) and glutamine 261. An L-aspartate-binding site is contributed by histidine 481. Residue glutamate 516 coordinates ATP. Arginine 523 lines the L-aspartate pocket. 568–571 (GMDR) contributes to the ATP binding site.

It belongs to the class-II aminoacyl-tRNA synthetase family. Type 1 subfamily. Homodimer.

The protein localises to the cytoplasm. It catalyses the reaction tRNA(Asx) + L-aspartate + ATP = L-aspartyl-tRNA(Asx) + AMP + diphosphate. Aspartyl-tRNA synthetase with relaxed tRNA specificity since it is able to aspartylate not only its cognate tRNA(Asp) but also tRNA(Asn). Reaction proceeds in two steps: L-aspartate is first activated by ATP to form Asp-AMP and then transferred to the acceptor end of tRNA(Asp/Asn). This is Aspartate--tRNA(Asp/Asn) ligase 1 from Syntrophus aciditrophicus (strain SB).